Consider the following 324-residue polypeptide: Glyoxylate/hydroxypyruvate reductase B (324 aa).

Active-site residues include R237 and E266. H285 acts as the Proton donor in catalysis.

The protein belongs to the D-isomer specific 2-hydroxyacid dehydrogenase family. GhrB subfamily. Homodimer.

The protein resides in the cytoplasm. It catalyses the reaction glycolate + NADP(+) = glyoxylate + NADPH + H(+). The catalysed reaction is (R)-glycerate + NAD(+) = 3-hydroxypyruvate + NADH + H(+). The enzyme catalyses (R)-glycerate + NADP(+) = 3-hydroxypyruvate + NADPH + H(+). Functionally, catalyzes the NADPH-dependent reduction of glyoxylate and hydroxypyruvate into glycolate and glycerate, respectively. The chain is Glyoxylate/hydroxypyruvate reductase B from Escherichia coli O9:H4 (strain HS).